Consider the following 154-residue polypeptide: Putative lipoprotein MAB_4074c (154 aa).

The N-terminal stretch at 1 to 21 is a signal peptide; it reads MMNRVIVGAMGLLAAGAVVVG. C22 carries the N-palmitoyl cysteine lipid modification. The S-diacylglycerol cysteine moiety is linked to residue C22.

The protein belongs to the mycobacterial 19 kDa antigen family.

The protein resides in the cell membrane. The protein is Putative lipoprotein MAB_4074c of Mycobacteroides abscessus (strain ATCC 19977 / DSM 44196 / CCUG 20993 / CIP 104536 / JCM 13569 / NCTC 13031 / TMC 1543 / L948) (Mycobacterium abscessus).